The sequence spans 557 residues: 2-isopropylmalate synthase (557 aa).

The 275-residue stretch at 33-307 (PIWCSSDLRD…DPQLDFSDID (275 aa)) folds into the Pyruvate carboxyltransferase domain. Positions 42, 246, 248, and 282 each coordinate Mg(2+). The interval 439–557 (ANSPYALVSH…SLSQQEAKAA (119 aa)) is regulatory domain.

The protein belongs to the alpha-IPM synthase/homocitrate synthase family. LeuA type 2 subfamily. As to quaternary structure, homodimer. Mg(2+) serves as cofactor.

Its subcellular location is the cytoplasm. The enzyme catalyses 3-methyl-2-oxobutanoate + acetyl-CoA + H2O = (2S)-2-isopropylmalate + CoA + H(+). It participates in amino-acid biosynthesis; L-leucine biosynthesis; L-leucine from 3-methyl-2-oxobutanoate: step 1/4. Its function is as follows. Catalyzes the condensation of the acetyl group of acetyl-CoA with 3-methyl-2-oxobutanoate (2-ketoisovalerate) to form 3-carboxy-3-hydroxy-4-methylpentanoate (2-isopropylmalate). The protein is 2-isopropylmalate synthase of Pseudomonas putida (strain W619).